The chain runs to 718 residues: Methionine--tRNA ligase (718 aa).

The 'HIGH' region motif lies at 27-37; the sequence is PYANGQIHIGH. 4 residues coordinate Zn(2+): Cys-158, Cys-161, Cys-171, and Cys-174. The 'KMSKS' region signature appears at 348–352; it reads KMSKS. Position 351 (Lys-351) interacts with ATP. A tRNA-binding domain is found at 612 to 718; that stretch reads DFAKIDLRIA…SGAKPGMRVK (107 aa).

It belongs to the class-I aminoacyl-tRNA synthetase family. MetG type 1 subfamily. In terms of assembly, homodimer. Zn(2+) is required as a cofactor.

Its subcellular location is the cytoplasm. The enzyme catalyses tRNA(Met) + L-methionine + ATP = L-methionyl-tRNA(Met) + AMP + diphosphate. In terms of biological role, is required not only for elongation of protein synthesis but also for the initiation of all mRNA translation through initiator tRNA(fMet) aminoacylation. This is Methionine--tRNA ligase from Burkholderia cenocepacia (strain ATCC BAA-245 / DSM 16553 / LMG 16656 / NCTC 13227 / J2315 / CF5610) (Burkholderia cepacia (strain J2315)).